The chain runs to 177 residues: B-phycoerythrin beta chain (177 aa).

Residues Cys50 and Cys61 each coordinate (2R,3E)-phycoerythrobilin. Position 72 is an N4-methylasparagine (Asn72). 2 residues coordinate (2R,3E)-phycoerythrobilin: Cys82 and Cys158.

The protein belongs to the phycobiliprotein family. Heterotetramer of one alpha-1, one alpha-2, and two beta chains. Post-translationally, contains three covalently linked bilin chromophores.

The protein localises to the plastid. It localises to the chloroplast thylakoid membrane. Functionally, light-harvesting photosynthetic bile pigment-protein from the phycobiliprotein complex. The chain is B-phycoerythrin beta chain (cpeB) from Guillardia theta (Cryptophyte).